Consider the following 336-residue polypeptide: Probable allantoicase (336 aa).

Belongs to the allantoicase family.

The catalysed reaction is allantoate + H2O = (S)-ureidoglycolate + urea. The protein operates within nitrogen metabolism; (S)-allantoin degradation; (S)-ureidoglycolate from allantoate (aminidohydrolase route): step 1/1. The sequence is that of Probable allantoicase from Acinetobacter baumannii (strain ATCC 17978 / DSM 105126 / CIP 53.77 / LMG 1025 / NCDC KC755 / 5377).